The primary structure comprises 289 residues: Protease HtpX homolog (289 aa).

2 consecutive transmembrane segments (helical) span residues 8–28 (LALLAALSGLLIAISYWVIGG) and 29–49 (SSGLMIGIGLAAVTNLLSWYQ). Residue His132 participates in Zn(2+) binding. Glu133 is an active-site residue. His136 contributes to the Zn(2+) binding site. Transmembrane regions (helical) follow at residues 151-171 (VAGAISFLAQMVSYSLWFGGI) and 183-203 (LGVLLTVVLAPIAATIIQLAI). Glu208 contributes to the Zn(2+) binding site.

Belongs to the peptidase M48B family. It depends on Zn(2+) as a cofactor.

The protein localises to the cell inner membrane. This is Protease HtpX homolog from Nostoc sp. (strain PCC 7120 / SAG 25.82 / UTEX 2576).